The following is a 223-amino-acid chain: Ribose-5-phosphate isomerase A (223 aa).

Substrate is bound by residues 32 to 35 (TGST), 85 to 88 (DGAD), and 98 to 101 (KGGG). The active-site Proton acceptor is the E107. K125 contacts substrate.

It belongs to the ribose 5-phosphate isomerase family. As to quaternary structure, homodimer.

The catalysed reaction is aldehydo-D-ribose 5-phosphate = D-ribulose 5-phosphate. The protein operates within carbohydrate degradation; pentose phosphate pathway; D-ribose 5-phosphate from D-ribulose 5-phosphate (non-oxidative stage): step 1/1. Catalyzes the reversible conversion of ribose-5-phosphate to ribulose 5-phosphate. The sequence is that of Ribose-5-phosphate isomerase A from Pseudomonas syringae pv. tomato (strain ATCC BAA-871 / DC3000).